Reading from the N-terminus, the 677-residue chain is Methionine--tRNA ligase (677 aa).

A 'HIGH' region motif is present at residues 15–25; that stretch reads PYANGSIHLGH. The Zn(2+) site is built by Cys-146, Cys-149, Cys-159, and Cys-162. Residues 333–337 carry the 'KMSKS' region motif; that stretch reads KMSKS. ATP is bound at residue Lys-336. Positions 575 to 677 constitute a tRNA-binding domain; sequence DFAKVDLRVA…DGAKPGQQVK (103 aa).

This sequence belongs to the class-I aminoacyl-tRNA synthetase family. MetG type 1 subfamily. Homodimer. Requires Zn(2+) as cofactor.

The protein resides in the cytoplasm. It carries out the reaction tRNA(Met) + L-methionine + ATP = L-methionyl-tRNA(Met) + AMP + diphosphate. Its function is as follows. Is required not only for elongation of protein synthesis but also for the initiation of all mRNA translation through initiator tRNA(fMet) aminoacylation. The polypeptide is Methionine--tRNA ligase (Citrobacter koseri (strain ATCC BAA-895 / CDC 4225-83 / SGSC4696)).